The primary structure comprises 264 residues: Small ribosomal subunit protein uS2 (264 aa).

Residues 243-253 (IEAAEDGEEVD) show a composition bias toward acidic residues. The segment at 243 to 264 (IEAAEDGEEVDNAQLTSSQGRS) is disordered. The span at 255–264 (AQLTSSQGRS) shows a compositional bias: polar residues.

Belongs to the universal ribosomal protein uS2 family.

The polypeptide is Small ribosomal subunit protein uS2 (Deinococcus geothermalis (strain DSM 11300 / CIP 105573 / AG-3a)).